The following is a 151-amino-acid chain: UPF0178 protein Pfl01_5469 (151 aa).

It belongs to the UPF0178 family.

The chain is UPF0178 protein Pfl01_5469 from Pseudomonas fluorescens (strain Pf0-1).